Reading from the N-terminus, the 361-residue chain is AT-hook motif nuclear-localized protein 12 (361 aa).

2 disordered regions span residues 29-143 (SQVA…GRKQ) and 286-361 (NNKT…LTRG). Positions 48–59 (SNPNIHHPQANN) are enriched in polar residues. A compositionally biased stretch (pro residues) spans 85-95 (QPPPPPPPPEE). The short motif at 99–107 (KRKRGRPRK) is the Bipartite nuclear localization signal element. 2 DNA-binding regions (a.T hook) span residues 99–111 (KRKRGRPRKYGEP) and 130–142 (KRARGRPPGTGRK). Residues 154–297 (TSAGLAFAPH…KTIRQEKEPN (144 aa)) enclose the PPC domain. A compositionally biased stretch (low complexity) spans 306–322 (ETTPGSAAEPAASAGQQ).

In terms of assembly, homodimer. Interacts with AHL27, AHL29 and ATAF2/NAC081.

It localises to the nucleus. Transcription factor that specifically binds AT-rich DNA sequences related to the nuclear matrix attachment regions (MARs). This chain is AT-hook motif nuclear-localized protein 12, found in Arabidopsis thaliana (Mouse-ear cress).